The primary structure comprises 340 residues: DNA-directed RNA polymerase subunit alpha (340 aa).

Residues 1-236 (MLSLSKNWNT…EQLQLFISFE (236 aa)) form an alpha N-terminal domain (alpha-NTD) region. Residues 251–340 (FAPYLLKRVD…LSKRYEDSYN (90 aa)) are alpha C-terminal domain (alpha-CTD).

Belongs to the RNA polymerase alpha chain family. As to quaternary structure, homodimer. The RNAP catalytic core consists of 2 alpha, 1 beta, 1 beta' and 1 omega subunit. When a sigma factor is associated with the core the holoenzyme is formed, which can initiate transcription.

It carries out the reaction RNA(n) + a ribonucleoside 5'-triphosphate = RNA(n+1) + diphosphate. Its function is as follows. DNA-dependent RNA polymerase catalyzes the transcription of DNA into RNA using the four ribonucleoside triphosphates as substrates. In Rickettsia peacockii (strain Rustic), this protein is DNA-directed RNA polymerase subunit alpha.